Here is a 266-residue protein sequence, read N- to C-terminus: MIKYLQSHLEEQGYLFVTLPKPDLAPLQLLTEYKGHLEEYDGSLLDLFEPDGSPFPIRDRQLPNFSGQQLLQTDWSAGADLLHGLFKLFQQKEDKLKASLSGMKGLVLSFAYENIEEERVSEQALDNFLAGAMPKKEGFQRSVERLQDGELYVLTSVMRSNQFTVTIDCQREDQGKLEAAVAEIVDAHASIERKQSNSFSLQTEGEQAFVFACRAAQVLYNKKQWFQFWKKDKDGFRIEKREGMVVRGEEDFSVQPLQAPSGLLKL.

4 beta stranded membrane-spanning segments follow: residues 65–81, 93–113, 162–181, and 187–203; these read FSGQ…GADL, EDKL…FAYE, QFTV…EAAV, and AHAS…SLQT. Residues 248 to 266 form a C-terminal region region; that stretch reads GEEDFSVQPLQAPSGLLKL.

This sequence belongs to the bacterial gasdermin family. Monomer. As to quaternary structure, forms large, homooligomeric ring-shaped pores when inserted in membranes.

Its subcellular location is the cytoplasm. It localises to the cell membrane. The full-length protein before cleavage is inactive: intramolecular interactions between the N-terminal domain and the C-terminal region mediate autoinhibition. The pyroptosis-like-inducing activity is carried by the released N-terminal domain (Gasdermin bGSDM, N-terminus). Functionally, precursor of a pore-forming protein involved in defense against bacteriophages. Cleavage of this precursor by its dedicated protease releases the active moiety (gasdermin bGSDM, N-terminus) which inserts into membranes, forming pores and triggering cell death. Expression of bGSDM and the neighboring protease gene (Ga0307981_100051430) is highly toxic in E.coli. In terms of biological role, pore-forming protein that causes membrane permeabilization via a pyroptosis-like activity. This is the active form which makes ring-like pores with an interior pore diameter of 130-190 Angstroms, when integrated in liposomes. This chain is Gasdermin bGSDM, found in Unknown prokaryotic organism.